We begin with the raw amino-acid sequence, 157 residues long: SsrA-binding protein (157 aa).

Belongs to the SmpB family.

It is found in the cytoplasm. Functionally, required for rescue of stalled ribosomes mediated by trans-translation. Binds to transfer-messenger RNA (tmRNA), required for stable association of tmRNA with ribosomes. tmRNA and SmpB together mimic tRNA shape, replacing the anticodon stem-loop with SmpB. tmRNA is encoded by the ssrA gene; the 2 termini fold to resemble tRNA(Ala) and it encodes a 'tag peptide', a short internal open reading frame. During trans-translation Ala-aminoacylated tmRNA acts like a tRNA, entering the A-site of stalled ribosomes, displacing the stalled mRNA. The ribosome then switches to translate the ORF on the tmRNA; the nascent peptide is terminated with the 'tag peptide' encoded by the tmRNA and targeted for degradation. The ribosome is freed to recommence translation, which seems to be the essential function of trans-translation. This Elusimicrobium minutum (strain Pei191) protein is SsrA-binding protein.